A 172-amino-acid chain; its full sequence is S-ribosylhomocysteine lyase (172 aa).

Fe cation-binding residues include histidine 54, histidine 58, and cysteine 128.

The protein belongs to the LuxS family. Homodimer. Fe cation serves as cofactor.

The enzyme catalyses S-(5-deoxy-D-ribos-5-yl)-L-homocysteine = (S)-4,5-dihydroxypentane-2,3-dione + L-homocysteine. Involved in the synthesis of autoinducer 2 (AI-2) which is secreted by bacteria and is used to communicate both the cell density and the metabolic potential of the environment. The regulation of gene expression in response to changes in cell density is called quorum sensing. Catalyzes the transformation of S-ribosylhomocysteine (RHC) to homocysteine (HC) and 4,5-dihydroxy-2,3-pentadione (DPD). The polypeptide is S-ribosylhomocysteine lyase (Vibrio atlanticus (strain LGP32) (Vibrio splendidus (strain Mel32))).